The following is a 914-amino-acid chain: Beta-mannosidase A (914 aa).

Residues 1 to 20 form the signal peptide; sequence MRFTATAAALVASSIPATLG. 7 N-linked (GlcNAc...) asparagine glycosylation sites follow: N39, N79, N230, N265, N299, N309, and N330. E462 functions as the Proton donor in the catalytic mechanism. N591, N614, N641, N721, N744, N773, N784, and N909 each carry an N-linked (GlcNAc...) asparagine glycan.

The protein belongs to the glycosyl hydrolase 2 family. Beta-mannosidase A subfamily. As to quaternary structure, homodimer.

The protein localises to the secreted. It catalyses the reaction Hydrolysis of terminal, non-reducing beta-D-mannose residues in beta-D-mannosides.. It participates in glycan metabolism; N-glycan degradation. In terms of biological role, exoglycosidase that cleaves the single beta-linked mannose residue from the non-reducing end of beta-mannosidic oligosaccharides of various complexity and length. Involved in the degradation of polymeric mannan and galactomannan. In Aspergillus oryzae (strain ATCC 42149 / RIB 40) (Yellow koji mold), this protein is Beta-mannosidase A (mndA).